Reading from the N-terminus, the 325-residue chain is Acetyl-coenzyme A carboxylase carboxyl transferase subunit alpha (325 aa).

Positions 38–292 (RLEDRLAKLQ…DETLKQSLKT (255 aa)) constitute a CoA carboxyltransferase C-terminal domain.

Belongs to the AccA family. Acetyl-CoA carboxylase is a heterohexamer composed of biotin carboxyl carrier protein (AccB), biotin carboxylase (AccC) and two subunits each of ACCase subunit alpha (AccA) and ACCase subunit beta (AccD).

The protein resides in the cytoplasm. The catalysed reaction is N(6)-carboxybiotinyl-L-lysyl-[protein] + acetyl-CoA = N(6)-biotinyl-L-lysyl-[protein] + malonyl-CoA. It functions in the pathway lipid metabolism; malonyl-CoA biosynthesis; malonyl-CoA from acetyl-CoA: step 1/1. Its activity is regulated as follows. Inhibited by pyrrolidine dione antibiotics moiramide B (CPD1) and CPD2. In terms of biological role, component of the acetyl coenzyme A carboxylase (ACC) complex. First, biotin carboxylase catalyzes the carboxylation of biotin on its carrier protein (BCCP) and then the CO(2) group is transferred by the carboxyltransferase to acetyl-CoA to form malonyl-CoA. This is Acetyl-coenzyme A carboxylase carboxyl transferase subunit alpha from Bacillus subtilis (strain 168).